Reading from the N-terminus, the 647-residue chain is Threonine--tRNA ligase (647 aa).

The region spanning 1-61 (MIKITFPDGA…EEDGSIEIVT (61 aa)) is the TGS domain. Positions 240–538 (DHRKLGKELD…LIETYKGAFP (299 aa)) are catalytic. Residues cysteine 334, histidine 385, and histidine 515 each coordinate Zn(2+).

Belongs to the class-II aminoacyl-tRNA synthetase family. In terms of assembly, homodimer. Zn(2+) is required as a cofactor.

It is found in the cytoplasm. The catalysed reaction is tRNA(Thr) + L-threonine + ATP = L-threonyl-tRNA(Thr) + AMP + diphosphate + H(+). Catalyzes the attachment of threonine to tRNA(Thr) in a two-step reaction: L-threonine is first activated by ATP to form Thr-AMP and then transferred to the acceptor end of tRNA(Thr). Also edits incorrectly charged L-seryl-tRNA(Thr). The protein is Threonine--tRNA ligase of Streptococcus agalactiae serotype V (strain ATCC BAA-611 / 2603 V/R).